Consider the following 178-residue polypeptide: Alkyl hydroperoxide reductase AhpD (178 aa).

The active-site Proton donor is the cysteine 130. A disulfide bridge links cysteine 130 with cysteine 133. The active-site Cysteine sulfenic acid (-SOH) intermediate is the cysteine 133.

The protein belongs to the AhpD family. In terms of assembly, homotrimer.

It carries out the reaction N(6)-[(R)-dihydrolipoyl]-L-lysyl-[lipoyl-carrier protein] + a hydroperoxide = N(6)-[(R)-lipoyl]-L-lysyl-[lipoyl-carrier protein] + an alcohol + H2O. Its function is as follows. Antioxidant protein with alkyl hydroperoxidase activity. Required for the reduction of the AhpC active site cysteine residues and for the regeneration of the AhpC enzyme activity. The chain is Alkyl hydroperoxide reductase AhpD from Mycobacterium marinum (strain ATCC BAA-535 / M).